Reading from the N-terminus, the 213-residue chain is Putative thiamine-phosphate synthase (213 aa).

4-amino-2-methyl-5-(diphosphooxymethyl)pyrimidine contacts are provided by residues 38–42 and asparagine 70; that span reads QLREK. Aspartate 71 contacts Mg(2+). A 4-amino-2-methyl-5-(diphosphooxymethyl)pyrimidine-binding site is contributed by serine 109. A 2-[(2R,5Z)-2-carboxy-4-methylthiazol-5(2H)-ylidene]ethyl phosphate-binding site is contributed by 135-137; the sequence is TPS. Lysine 138 lines the 4-amino-2-methyl-5-(diphosphooxymethyl)pyrimidine pocket. 2-[(2R,5Z)-2-carboxy-4-methylthiazol-5(2H)-ylidene]ethyl phosphate is bound by residues glycine 166 and 186–187; that span reads IS.

It belongs to the thiamine-phosphate synthase family. Mg(2+) is required as a cofactor.

It carries out the reaction 2-[(2R,5Z)-2-carboxy-4-methylthiazol-5(2H)-ylidene]ethyl phosphate + 4-amino-2-methyl-5-(diphosphooxymethyl)pyrimidine + 2 H(+) = thiamine phosphate + CO2 + diphosphate. The enzyme catalyses 2-(2-carboxy-4-methylthiazol-5-yl)ethyl phosphate + 4-amino-2-methyl-5-(diphosphooxymethyl)pyrimidine + 2 H(+) = thiamine phosphate + CO2 + diphosphate. The catalysed reaction is 4-methyl-5-(2-phosphooxyethyl)-thiazole + 4-amino-2-methyl-5-(diphosphooxymethyl)pyrimidine + H(+) = thiamine phosphate + diphosphate. The protein operates within cofactor biosynthesis; thiamine diphosphate biosynthesis; thiamine phosphate from 4-amino-2-methyl-5-diphosphomethylpyrimidine and 4-methyl-5-(2-phosphoethyl)-thiazole: step 1/1. Functionally, condenses 4-methyl-5-(beta-hydroxyethyl)thiazole monophosphate (THZ-P) and 2-methyl-4-amino-5-hydroxymethyl pyrimidine pyrophosphate (HMP-PP) to form thiamine monophosphate (TMP). In Geobacter sulfurreducens (strain ATCC 51573 / DSM 12127 / PCA), this protein is Putative thiamine-phosphate synthase (thiE).